The chain runs to 375 residues: E3 ubiquitin-protein ligase FANCL (375 aa).

Position 2 is an N-acetylalanine (A2). The UBC-RWD region (URD) stretch occupies residues 104 to 294; the sequence is LPPPPQFYSS…KDVLEIDFPA (191 aa). C307, C310, C324, C329, H334, C337, C359, and C362 together coordinate Zn(2+). The RING-type; degenerate zinc finger occupies 307–363; that stretch reads CGICYAYQLDGTIPDQVCDNSQCGQPFHQICLYEWLRGLLTSRQSFNIIFGECPYCS.

As to quaternary structure, interacts with GGN. Belongs to the multisubunit FA complex composed of FANCA, FANCB, FANCC, FANCE, FANCF, FANCG, FANCL/PHF9 and FANCM. The complex is not found in FA patients. In complex with FANCF, FANCA and FANCG, but not with FANCC, nor FANCE, interacts with HES1; this interaction may be essential for the stability and nuclear localization of FA core complex proteins. Interacts with FANCI. Directly interacts (via the RING-type zinc finger) with UBE2T and UBE2W. Post-translationally, the RING-type zinc finger domain is monoubiquitinated in the presence of UBE2T and UBE2W.

It localises to the cytoplasm. It is found in the nucleus. The enzyme catalyses S-ubiquitinyl-[E2 ubiquitin-conjugating enzyme]-L-cysteine + [acceptor protein]-L-lysine = [E2 ubiquitin-conjugating enzyme]-L-cysteine + N(6)-ubiquitinyl-[acceptor protein]-L-lysine.. Its pathway is protein modification; protein ubiquitination. In terms of biological role, ubiquitin ligase protein that mediates monoubiquitination of FANCD2 in the presence of UBE2T, a key step in the DNA damage pathway. Also mediates monoubiquitination of FANCI. May stimulate the ubiquitin release from UBE2W. May be required for proper primordial germ cell proliferation in the embryonic stage, whereas it is probably not needed for spermatogonial proliferation after birth. The protein is E3 ubiquitin-protein ligase FANCL (FANCL) of Homo sapiens (Human).